Consider the following 407-residue polypeptide: 1-deoxy-D-xylulose 5-phosphate reductoisomerase (407 aa).

Residues threonine 25, glycine 26, serine 27, isoleucine 28, asparagine 53, and asparagine 136 each contribute to the NADPH site. A 1-deoxy-D-xylulose 5-phosphate-binding site is contributed by lysine 137. Glutamate 138 lines the NADPH pocket. Aspartate 162 lines the Mn(2+) pocket. The 1-deoxy-D-xylulose 5-phosphate site is built by serine 163, glutamate 164, serine 188, and histidine 211. Glutamate 164 serves as a coordination point for Mn(2+). Glycine 217 is a binding site for NADPH. Positions 224, 229, 230, and 233 each coordinate 1-deoxy-D-xylulose 5-phosphate. Glutamate 233 is a Mn(2+) binding site.

This sequence belongs to the DXR family. Mg(2+) is required as a cofactor. The cofactor is Mn(2+).

It catalyses the reaction 2-C-methyl-D-erythritol 4-phosphate + NADP(+) = 1-deoxy-D-xylulose 5-phosphate + NADPH + H(+). The protein operates within isoprenoid biosynthesis; isopentenyl diphosphate biosynthesis via DXP pathway; isopentenyl diphosphate from 1-deoxy-D-xylulose 5-phosphate: step 1/6. In terms of biological role, catalyzes the NADPH-dependent rearrangement and reduction of 1-deoxy-D-xylulose-5-phosphate (DXP) to 2-C-methyl-D-erythritol 4-phosphate (MEP). This is 1-deoxy-D-xylulose 5-phosphate reductoisomerase from Afipia carboxidovorans (strain ATCC 49405 / DSM 1227 / KCTC 32145 / OM5) (Oligotropha carboxidovorans).